A 395-amino-acid chain; its full sequence is MNFQRMTDLNLAGKRVLIREDLNVPVKNGVITSDARLRAALPTIKAALEKGAAVMVFSHLGRPVEGEPKPEQSLAPVAAYLTEALGQEVKLFTDYLNGVEVEAGQVVLLENVRFNPGEKKNNPELAQKYAALCDVFVMDAFGTAHRAEASTEGVARFAPVAAAGPLLAAELDALGRAMQTPEKPMVAIVAGSKVSTKLDVLNSLSGICDQLIVGGGIANTFLAAAGYNVGKSLYEADLVETAKQIAAKVSVPLPTDVVVADASQINFEDFLGSLAAAQAVIKKVEDVTANDMILDVGPETAKAFANILTTSKTILWNGPVGVFEVDQFGEGTKALSLAVAQSDAFSIAGGGDTLAAIDKYNVADQIGYISTGGGAFLEFVEGKTLPAVAVLLERA.

Residues 21–23 (DLN), Arg36, 59–62 (HLGR), Arg113, and Arg146 each bind substrate. ATP contacts are provided by residues Lys197, Glu324, and 350–353 (GGDT).

It belongs to the phosphoglycerate kinase family. In terms of assembly, monomer.

Its subcellular location is the cytoplasm. The catalysed reaction is (2R)-3-phosphoglycerate + ATP = (2R)-3-phospho-glyceroyl phosphate + ADP. It functions in the pathway carbohydrate degradation; glycolysis; pyruvate from D-glyceraldehyde 3-phosphate: step 2/5. In Acinetobacter baumannii (strain ACICU), this protein is Phosphoglycerate kinase.